The primary structure comprises 746 residues: Alpha-galactosidase 2 (746 aa).

An N-terminal signal peptide occupies residues Met1–Ala26. Residues Asn43, Asn156, Asn180, Asn188, Asn360, Asn427, Asn446, and Asn495 are each glycosylated (N-linked (GlcNAc...) asparagine). Catalysis depends on Asp504, which acts as the Nucleophile. Catalysis depends on Asp566, which acts as the Proton donor. Asn714 is a glycosylation site (N-linked (GlcNAc...) asparagine).

This sequence belongs to the glycosyl hydrolase 27 family.

Its subcellular location is the secreted. It carries out the reaction Hydrolysis of terminal, non-reducing alpha-D-galactose residues in alpha-D-galactosides, including galactose oligosaccharides, galactomannans and galactolipids.. Alpha-galactosidase involved in the degradation of simple oligosaccharides like melibiose, raffinose and stachyose, and of polymeric galacto(gluco)mannans. The chain is Alpha-galactosidase 2 (agl2) from Hypocrea jecorina (Trichoderma reesei).